A 152-amino-acid polypeptide reads, in one-letter code: Ribonuclease H (152 aa).

Residues 6–147 (KKNRVIAYTD…ADELANKAIA (142 aa)) enclose the RNase H type-1 domain. Positions 15, 53, 75, and 139 each coordinate Mg(2+).

Belongs to the RNase H family. As to quaternary structure, monomer. The cofactor is Mg(2+).

It localises to the cytoplasm. The catalysed reaction is Endonucleolytic cleavage to 5'-phosphomonoester.. In terms of biological role, endonuclease that specifically degrades the RNA of RNA-DNA hybrids. This Francisella tularensis subsp. tularensis (strain FSC 198) protein is Ribonuclease H.